The primary structure comprises 520 residues: Ribonuclease Y (520 aa).

The helical transmembrane segment at 4–24 (TMFTIISILLSLICLVVGYFV) threads the bilayer. One can recognise a KH domain in the interval 210-273 (TVSVVNLPND…ETARIALDKL (64 aa)). The HD domain maps to 336–429 (VLKHSIEVAH…VAAADALSAA (94 aa)).

It belongs to the RNase Y family.

The protein localises to the cell membrane. In terms of biological role, endoribonuclease that initiates mRNA decay. The protein is Ribonuclease Y of Bacillus pumilus (strain SAFR-032).